The chain runs to 372 residues: NAD(P)H-quinone oxidoreductase subunit 1 (372 aa).

Transmembrane regions (helical) follow at residues 27 to 47 (VLWMPLPMLLMIIAATVGVLV), 97 to 117 (FLFTIGPALVVIPVFLSYLIV), 128 to 148 (VGAGVFLWIALSSIQPIGLLM), 176 to 196 (LALAVLAVVMMSNSLSTIDIV), 204 to 224 (ILGWNIWRQPVGFIIFWIAAL), 254 to 274 (FALFYVGSYVNLILSALLVSI), 308 to 328 (ALGITMTVLKAYLLVFTAILL), and 347 to 367 (FLLPISLVNLLVTAALKLTFP).

It belongs to the complex I subunit 1 family. In terms of assembly, NDH-1 is composed of at least 11 different subunits.

The protein localises to the cellular thylakoid membrane. It carries out the reaction a plastoquinone + NADH + (n+1) H(+)(in) = a plastoquinol + NAD(+) + n H(+)(out). The catalysed reaction is a plastoquinone + NADPH + (n+1) H(+)(in) = a plastoquinol + NADP(+) + n H(+)(out). In terms of biological role, NDH-1 shuttles electrons from an unknown electron donor, via FMN and iron-sulfur (Fe-S) centers, to quinones in the respiratory and/or the photosynthetic chain. The immediate electron acceptor for the enzyme in this species is believed to be plastoquinone. Couples the redox reaction to proton translocation, and thus conserves the redox energy in a proton gradient. The sequence is that of NAD(P)H-quinone oxidoreductase subunit 1 from Synechococcus elongatus (strain ATCC 33912 / PCC 7942 / FACHB-805) (Anacystis nidulans R2).